We begin with the raw amino-acid sequence, 416 residues long: Cotranscriptional regulator ARB2A (416 aa).

The signal sequence occupies residues 1–18 (MSISLSSLILLPIWINMA). The tract at residues 208–247 (KPKIHVQSSSDSSDEPAEKRERKDKVSKETKKRRDFYEKY) is disordered. A compositionally biased stretch (basic and acidic residues) spans 223–236 (PAEKRERKDKVSKE). Ser-293 (nucleophile) is an active-site residue. The short motif at 413 to 416 (HEEL) is the Prevents secretion from ER element.

This sequence belongs to the ARB2A family. Interacts with AGO2. Found in a complex, composed of AGO2, CHD7 and ARB2A.

It is found in the nucleus. It localises to the cytoplasm. The protein resides in the endoplasmic reticulum. Its function is as follows. Plays a role in the regulation of alternative splicing, by interacting with AGO2 and CHD7. Seems to be required for stabilizing protein-protein interactions at the chromatin-spliceosome interface. May have hydrolase activity. This Homo sapiens (Human) protein is Cotranscriptional regulator ARB2A.